The primary structure comprises 375 residues: Chaperone protein DnaJ (375 aa).

The J domain occupies 5–70 (DYYEVLGVER…GKRMAYDQYG (66 aa)). A CR-type zinc finger spans residues 134–212 (GTTVTIRVPT…CHGQGRVEEH (79 aa)). The Zn(2+) site is built by cysteine 147, cysteine 150, cysteine 164, cysteine 167, cysteine 186, cysteine 189, cysteine 200, and cysteine 203. CXXCXGXG motif repeat units lie at residues 147–154 (CKTCDGSG), 164–171 (CTTCGGIG), 186–193 (CPRCHGSG), and 200–207 (CPDCHGQG).

Belongs to the DnaJ family. Homodimer. Zn(2+) serves as cofactor.

The protein resides in the cytoplasm. Functionally, participates actively in the response to hyperosmotic and heat shock by preventing the aggregation of stress-denatured proteins and by disaggregating proteins, also in an autonomous, DnaK-independent fashion. Unfolded proteins bind initially to DnaJ; upon interaction with the DnaJ-bound protein, DnaK hydrolyzes its bound ATP, resulting in the formation of a stable complex. GrpE releases ADP from DnaK; ATP binding to DnaK triggers the release of the substrate protein, thus completing the reaction cycle. Several rounds of ATP-dependent interactions between DnaJ, DnaK and GrpE are required for fully efficient folding. Also involved, together with DnaK and GrpE, in the DNA replication of plasmids through activation of initiation proteins. The sequence is that of Chaperone protein DnaJ from Azotobacter vinelandii (strain DJ / ATCC BAA-1303).